The primary structure comprises 114 residues: NLP effector protein 1 (114 aa).

Belongs to the Necrosis inducing protein (NPP1) family.

It localises to the secreted. The protein resides in the host cytoplasm. Functionally, probable secreted effector that may act as a pathogen-associated molecular pattern (PAMP) recognized by the plant immune system. Seems not to induce necrosis, neither in several susceptible or resistant Vitis species nor in the dicot model plant Nicotiana benthamiana. This chain is NLP effector protein 1, found in Plasmopara viticola (Downy mildew of grapevine).